The sequence spans 189 residues: Small ribosomal subunit protein uS5 (189 aa).

Residues 22–85 (FVDKLVAINR…ESAKRDLIFV (64 aa)) form the S5 DRBM domain.

The protein belongs to the universal ribosomal protein uS5 family. In terms of assembly, part of the 30S ribosomal subunit. Contacts proteins S4 and S8.

Functionally, with S4 and S12 plays an important role in translational accuracy. Located at the back of the 30S subunit body where it stabilizes the conformation of the head with respect to the body. The protein is Small ribosomal subunit protein uS5 of Allorhizobium ampelinum (strain ATCC BAA-846 / DSM 112012 / S4) (Agrobacterium vitis (strain S4)).